A 184-amino-acid polypeptide reads, in one-letter code: Photosystem I assembly protein Ycf4 (184 aa).

The next 2 membrane-spanning stretches (helical) occupy residues 21 to 43 (NFCWACILFLGSLGFLLVGTSSY) and 58 to 80 (IFFPQGIVMSFYGIAGLFISSYL).

This sequence belongs to the Ycf4 family.

The protein resides in the plastid. Its subcellular location is the chloroplast thylakoid membrane. Functionally, seems to be required for the assembly of the photosystem I complex. The chain is Photosystem I assembly protein Ycf4 from Calycanthus floridus var. glaucus (Eastern sweetshrub).